A 35-amino-acid polypeptide reads, in one-letter code: Coenzyme PQQ synthesis protein A (35 aa).

Residues E16–Y20 constitute a cross-link (pyrroloquinoline quinone (Glu-Tyr)).

Belongs to the PqqA family.

It functions in the pathway cofactor biosynthesis; pyrroloquinoline quinone biosynthesis. In terms of biological role, required for coenzyme pyrroloquinoline quinone (PQQ) biosynthesis. PQQ is probably formed by cross-linking a specific glutamate to a specific tyrosine residue and excising these residues from the peptide. The polypeptide is Coenzyme PQQ synthesis protein A (Ruegeria pomeroyi (strain ATCC 700808 / DSM 15171 / DSS-3) (Silicibacter pomeroyi)).